We begin with the raw amino-acid sequence, 21 residues long: Protein YnfR (21 aa).

This Escherichia coli (strain K12) protein is Protein YnfR.